The primary structure comprises 199 residues: Ribonuclease HII (199 aa).

Positions 10 to 199 constitute an RNase H type-2 domain; the sequence is HLVAGVDEVG…VKRALGLASN (190 aa). A divalent metal cation-binding residues include aspartate 16, glutamate 17, and aspartate 108.

Belongs to the RNase HII family. It depends on Mn(2+) as a cofactor. The cofactor is Mg(2+).

The protein localises to the cytoplasm. It carries out the reaction Endonucleolytic cleavage to 5'-phosphomonoester.. Functionally, endonuclease that specifically degrades the RNA of RNA-DNA hybrids. The chain is Ribonuclease HII from Klebsiella pneumoniae subsp. pneumoniae (strain ATCC 700721 / MGH 78578).